Consider the following 172-residue polypeptide: Myosin regulatory light polypeptide 9 (172 aa).

Residues 1-16 (MSSKRAKTKTTKKRPQ) are compositionally biased toward basic residues. Residues 1-20 (MSSKRAKTKTTKKRPQRATS) form a disordered region. Residue Ser-2 is modified to N-acetylserine. Position 19 is a phosphothreonine; by MLCK, CIT and ROCK2 (Thr-19). Ser-20 carries the phosphoserine; by CDC42BP, CIT, MLCK, PAK1, ROCK1, ROCK2, DAPK1, DAPK2 and ZIPK/DAPK3 modification. 3 consecutive EF-hand domains span residues 29–64 (SQIQ…LGKN), 98–133 (DPED…MGDR), and 134–169 (FTDE…GAKD). Ca(2+) contacts are provided by Asp-42, Asn-44, Asp-46, and Asp-53.

Myosin is a hexamer of 2 heavy chains and 4 light chains: interacts with myosin heavy chain MYO19. Interacts with LUZP1; the interaction results in inhibition of phosphorylation of MYL9 by DAPK3. Post-translationally, phosphorylation increases the actin-activated myosin ATPase activity and thereby regulates the contractile activity. It is required to generate the driving force in the migration of the cells but not necessary for localization of myosin-2 at the leading edge. Phosphorylation is required for myotube formation. Phosphorylated by DAPK3; DAPK3-mediated phosphorylation is inhibited by LUZP1.

The protein resides in the cytoplasm. It is found in the cytoskeleton. The protein localises to the cell cortex. In terms of biological role, myosin regulatory subunit that plays an important role in regulation of both smooth muscle and nonmuscle cell contractile activity via its phosphorylation. Implicated in cytokinesis, receptor capping, and cell locomotion. In myoblasts, may regulate PIEZO1-dependent cortical actomyosin assembly involved in myotube formation. The chain is Myosin regulatory light polypeptide 9 (MYL9) from Bos taurus (Bovine).